A 388-amino-acid polypeptide reads, in one-letter code: Succinate--CoA ligase [ADP-forming] subunit beta (388 aa).

Positions 9–244 (KEILRKFGVA…PDEEDPKETQ (236 aa)) constitute an ATP-grasp domain. ATP contacts are provided by residues Lys-46, 53 to 55 (GRG), Glu-99, Cys-102, and Glu-107. Mg(2+) contacts are provided by Asn-199 and Asp-213. Residues Asn-264 and 321–323 (GIM) each bind substrate.

It belongs to the succinate/malate CoA ligase beta subunit family. As to quaternary structure, heterotetramer of two alpha and two beta subunits. The cofactor is Mg(2+).

It carries out the reaction succinate + ATP + CoA = succinyl-CoA + ADP + phosphate. The catalysed reaction is GTP + succinate + CoA = succinyl-CoA + GDP + phosphate. The protein operates within carbohydrate metabolism; tricarboxylic acid cycle; succinate from succinyl-CoA (ligase route): step 1/1. Its function is as follows. Succinyl-CoA synthetase functions in the citric acid cycle (TCA), coupling the hydrolysis of succinyl-CoA to the synthesis of either ATP or GTP and thus represents the only step of substrate-level phosphorylation in the TCA. The beta subunit provides nucleotide specificity of the enzyme and binds the substrate succinate, while the binding sites for coenzyme A and phosphate are found in the alpha subunit. The polypeptide is Succinate--CoA ligase [ADP-forming] subunit beta (Anaeromyxobacter dehalogenans (strain 2CP-1 / ATCC BAA-258)).